Reading from the N-terminus, the 312-residue chain is tRNA-cytidine(32) 2-sulfurtransferase (312 aa).

The PP-loop motif motif lies at 39–44; it reads SGGKDS. Positions 114, 117, and 205 each coordinate [4Fe-4S] cluster.

Belongs to the TtcA family. Homodimer. Requires Mg(2+) as cofactor. [4Fe-4S] cluster is required as a cofactor.

It localises to the cytoplasm. It carries out the reaction cytidine(32) in tRNA + S-sulfanyl-L-cysteinyl-[cysteine desulfurase] + AH2 + ATP = 2-thiocytidine(32) in tRNA + L-cysteinyl-[cysteine desulfurase] + A + AMP + diphosphate + H(+). The protein operates within tRNA modification. In terms of biological role, catalyzes the ATP-dependent 2-thiolation of cytidine in position 32 of tRNA, to form 2-thiocytidine (s(2)C32). The sulfur atoms are provided by the cysteine/cysteine desulfurase (IscS) system. In Ralstonia nicotianae (strain ATCC BAA-1114 / GMI1000) (Ralstonia solanacearum), this protein is tRNA-cytidine(32) 2-sulfurtransferase.